Reading from the N-terminus, the 328-residue chain is UPF0421 protein SERP1427 (328 aa).

The next 4 membrane-spanning stretches (helical) occupy residues 26 to 46 (LFCM…IVTI), 61 to 81 (LPAT…FGDQ), 109 to 129 (AVLT…FNFF), and 132 to 152 (LLTA…ILPP).

It belongs to the UPF0421 family.

Its subcellular location is the cell membrane. The chain is UPF0421 protein SERP1427 from Staphylococcus epidermidis (strain ATCC 35984 / DSM 28319 / BCRC 17069 / CCUG 31568 / BM 3577 / RP62A).